We begin with the raw amino-acid sequence, 539 residues long: MHRRNLLKASMALAAYTGLSASGLLAARAWAGAADGQAQAFDFEQLKAQAKQLAASQYVDTKQVLPPTLAKMTPQNFNAIQYDSKHSLWNELNGQLDVQFFHVGMGFKQPVRMHSVDPKTRQAREVHFRPPLFNYQNTSVDTAQLKGDLGFAGFKLFKAPELDKHDVVSFLGASYFRAVDATGQYGLSARGLAIDTYAKRREEFPDFTQFWFETPDKDSTRFVVYALLDSPSATGAYRFDIDCQAERVVMDVDAHINARTAIEQLGIAPMTSMFSCGTHERRMCDTIHPQIHDSDRLAMWRGNGEWICRPLNNPANLQFNAFADKDPKGFGLVQTDHEFASYQDTVDWYSRRPSLWVEPTTAWGEGSIDLLEIPTTGETLDNIVAFWTPKKPVAAGDSLNYGYKLYWSALPPVGTPLARVHATRSGMGGFVEGWAPGEHYPEVWARRFAVDFTGGGLDRLPAGTGIEPVVTASNGEVKDFNVLVLDEIKGYRITFDWFPTNDSVEPVELRLFIRTNDRTLSETWLYQYFPPAPDKRKYP.

A signal peptide (tat-type signal) is located at residues 1-31; it reads MHRRNLLKASMALAAYTGLSASGLLAARAWA.

Belongs to the OpgD/OpgG family. Post-translationally, predicted to be exported by the Tat system. The position of the signal peptide cleavage has not been experimentally proven.

The protein resides in the periplasm. It participates in glycan metabolism; osmoregulated periplasmic glucan (OPG) biosynthesis. Its function is as follows. Probably involved in the control of the structural glucose backbone of osmoregulated periplasmic glucans (OPGs). The chain is Glucans biosynthesis protein D from Pseudomonas fluorescens (strain ATCC BAA-477 / NRRL B-23932 / Pf-5).